The sequence spans 291 residues: Transmembrane protein 41B (291 aa).

Residues 1–11 (MAKGRVAERSQ) show a composition bias toward basic and acidic residues. A disordered region spans residues 1-38 (MAKGRVAERSQTEMLHSTPAGDRAVGTQGSAAPGNKDH). Threonine 18 bears the Phosphothreonine mark. Transmembrane regions (helical) follow at residues 52–72 (TSLL…FLVY), 109–129 (FYVQ…TFAI), 147–169 (LALF…LSYL), 197–217 (LINY…FINI), 225–245 (PLKV…FVAI), and 262–282 (SWNS…PAIF). The interval 140-251 (GFLYPFPLAL…FVAIKAGTTL (112 aa)) is VTT domain; required for its function in autophagy.

It belongs to the TMEM41 family. As to quaternary structure, interacts with VMP1. Interacts with COPA, COPB1, VDAC1 and ERLIN2. Interacts with ATG2A. Interacts with SURF4.

The protein localises to the endoplasmic reticulum membrane. The protein resides in the endomembrane system. The catalysed reaction is a 1,2-diacyl-sn-glycero-3-phospho-L-serine(in) = a 1,2-diacyl-sn-glycero-3-phospho-L-serine(out). It carries out the reaction cholesterol(in) = cholesterol(out). It catalyses the reaction a 1,2-diacyl-sn-glycero-3-phosphocholine(in) = a 1,2-diacyl-sn-glycero-3-phosphocholine(out). The enzyme catalyses a 1,2-diacyl-sn-glycero-3-phosphoethanolamine(in) = a 1,2-diacyl-sn-glycero-3-phosphoethanolamine(out). Its function is as follows. Phospholipid scramblase involved in lipid homeostasis and membrane dynamics processes. Has phospholipid scramblase activity toward cholesterol and phosphatidylserine, as well as phosphatidylethanolamine and phosphatidylcholine. Required for autophagosome formation: participates in early stages of autophagosome biogenesis at the endoplasmic reticulum (ER) membrane by reequilibrating the leaflets of the ER as lipids are extracted by ATG2 (ATG2A or ATG2B) to mediate autophagosome assembly. In addition to autophagy, involved in other processes in which phospholipid scramblase activity is required. Required for normal motor neuron development. This is Transmembrane protein 41B from Rattus norvegicus (Rat).